A 96-amino-acid polypeptide reads, in one-letter code: Small ribosomal subunit protein bS16 (96 aa).

Belongs to the bacterial ribosomal protein bS16 family.

The sequence is that of Small ribosomal subunit protein bS16 from Vesicomyosocius okutanii subsp. Calyptogena okutanii (strain HA).